The following is a 428-amino-acid chain: Endoplasmic reticulum junction formation protein lunapark (428 aa).

Residue Gly-2 is the site of N-myristoyl glycine attachment. At 2-45 (GGLFSRWRTKLSTVEVLESIDKEIQALEEFREKNQRLQKLRVGR) the chain is on the cytoplasmic side. The stretch at 16–43 (EVLESIDKEIQALEEFREKNQRLQKLRV) forms a coiled coil. Residues 46–66 (LILYSSVLYLFTCLIVYLWYL) traverse the membrane as a helical segment. The Lumenal portion of the chain corresponds to 67–77 (PDEFTARLAMT). Residues 78–98 (LPFFAFPLIIWSIRTVIIFFF) form a helical membrane-spanning segment. Over 99–428 (SKRTERNNEA…ELNGESLTAE (330 aa)) the chain is Cytoplasmic. Residues 102-128 (TERNNEALDDLKSQRKKILEEVMEKET) are a coiled coil. A phosphoserine mark is found at Ser-114, Ser-153, Ser-177, Ser-182, and Ser-194. The tract at residues 143–248 (SKKAKECEPP…PPGPPLARPI (106 aa)) is disordered. Over residues 185 to 198 (QGPPPQVPVSPGPP) the composition is skewed to pro residues. Thr-211 and Thr-213 each carry phosphothreonine. A phosphoserine mark is found at Ser-217 and Ser-227. Residues 276 to 301 (CQQCFSHNGMALKEEFEYIAFRCAYC) form a C4-type; plays a role in ER morphology zinc finger. A phosphoserine mark is found at Ser-321, Ser-353, and Ser-384. Residues 361 to 428 (NNTEQTDDKI…ELNGESLTAE (68 aa)) form a disordered region. Positions 386–401 (SEEPEEKQETENEEAS) are enriched in acidic residues. At Ser-414 the chain carries Phosphoserine.

It belongs to the lunapark family. In terms of assembly, homodimer; homodimerization requires the C4-type zinc finger motif and decreases during mitosis in a phosphorylation-dependent manner. Post-translationally, myristoylated; myristoylation is necessary for the endoplasmic reticulum (ER) three-way ER tubular junction formation, but is not required neither for membrane translocation, membrane topology formation, nor for the specific localization to ER membranes. In terms of processing, phosphorylated. Phosphorylation occurs at Ser-177, Ser-182, Ser-217, Ser-227, Ser-321 and Ser-384 during interphase. Phosphorylation occurs at Ser-114, Ser-153, Ser-194, Thr-211 and Ser-353 during mitosis; these phosphorylations reduce both its homodimerization and the ER three-way tubular junction formation. Subject to proteasomal degradation following phosphorylation during mitosis.

The protein localises to the endoplasmic reticulum membrane. In terms of biological role, endoplasmic reticulum (ER)-shaping membrane protein that plays a role in determining ER morphology. Involved in the stabilization of nascent three-way ER tubular junctions within the ER network. May also play a role as a curvature-stabilizing protein within three-way ER tubular junction network. May be involved in limb and central nervous system development. The polypeptide is Endoplasmic reticulum junction formation protein lunapark (Pongo abelii (Sumatran orangutan)).